The sequence spans 371 residues: Chemerin-like receptor 1 (371 aa).

The Extracellular segment spans residues 1–39; sequence MEYDAYNDSGIYDDEYSDGFGYFVDLEEASPWEAKVAPV. An N-linked (GlcNAc...) asparagine glycan is attached at asparagine 7. Residues 40–62 form a helical membrane-spanning segment; sequence FLVVIYSLVCFLGLLGNGLVIVI. The Cytoplasmic portion of the chain corresponds to 63-73; sequence ATFKMKKTVNT. The helical transmembrane segment at 74–95 threads the bilayer; it reads VWFVNLAVADFLFNIFLPMHIT. Topologically, residues 96–112 are extracellular; that stretch reads YAAMDYHWVFGKAMCKI. An intrachain disulfide couples cysteine 110 to cysteine 187. The helical transmembrane segment at 113-133 threads the bilayer; that stretch reads SNFLLSHNMYTSVFLLTVISF. Topologically, residues 134–152 are cytoplasmic; that stretch reads DRCISVLLPVWSQNHRSIR. The helical transmembrane segment at 153 to 174 threads the bilayer; that stretch reads LAYMTCSAVWVLAFFLSSPSLV. Over 175 to 222 the chain is Extracellular; it reads FRDTANIHGKITCFNNFSLAAPESSPHPAHSQVVSTGYSRHVAVTVTR. N-linked (GlcNAc...) asparagine glycosylation is present at asparagine 190. A helical transmembrane segment spans residues 223-243; the sequence is FLCGFLIPVFIITACYLTIVF. At 244–259 the chain is on the cytoplasmic side; that stretch reads KLQRNRLAKNKKPFKI. The chain crosses the membrane as a helical span at residues 260-280; sequence IITIIITFFLCWCPYHTLYLL. Topologically, residues 281–298 are extracellular; that stretch reads ELHHTAVPSSVFSLGLPL. Residues 299–318 traverse the membrane as a helical segment; the sequence is ATAVAIANSCMNPILYVFMG. Residues 319-371 are Cytoplasmic-facing; that stretch reads HDFRKFKVALFSRLANALSEDTGPSSYPSHRSFTKMSSLNEKASVNEKETSTL. Serine 337 carries the post-translational modification Phosphoserine. A Phosphothreonine modification is found at threonine 340. Phosphoserine occurs at positions 347, 350, and 356. A Phosphothreonine modification is found at threonine 370.

Belongs to the chemokine-like receptor (CMKLR) family. Expressed in the differentiated adipocytes (at protein level). Ubiquitous. Highly expressed in adipose tissue and immature plasmacytoid dendritic cells (DCs) and at lower levels in myeloid DCs, macrophages, and NK cells. Expressed on macrophages isolated from different tissues, including peritoneal cavities, pleural cavities and spleen.

The protein localises to the cell membrane. Receptor for the chemoattractant adipokine chemerin/RARRES2 and for the omega-3 fatty acid derived molecule resolvin E1. Interaction with RARRES2 initiates activation of G proteins G(i)/G(o) and beta-arrestin pathways inducing cellular responses via second messenger pathways such as intracellular calcium mobilization, phosphorylation of MAP kinases MAPK1/MAPK3 (ERK1/2), TYRO3, MAPK14/P38MAPK and PI3K leading to multifunctional effects, like, reduction of immune responses, enhancing of adipogenesis and angionesis. Resolvin E1 down-regulates cytokine production in macrophages by reducing the activation of MAPK1/3 (ERK1/2) and NF-kappa-B. Positively regulates adipogenesis and adipocyte metabolism. This chain is Chemerin-like receptor 1 (Cmklr1), found in Mus musculus (Mouse).